Consider the following 250-residue polypeptide: NADH-quinone oxidoreductase subunit C (250 aa).

A disordered region spans residues 193-250 (GMTPPLPGDEKADMPPIDDPMVTEGPEDTGAGARANAKAAEGTPADPPAMDDEEEDDA). Residues 222–236 (GAGARANAKAAEGTP) are compositionally biased toward low complexity. Positions 241–250 (AMDDEEEDDA) are enriched in acidic residues.

It belongs to the complex I 30 kDa subunit family. In terms of assembly, NDH-1 is composed of 14 different subunits. Subunits NuoB, C, D, E, F, and G constitute the peripheral sector of the complex.

The protein resides in the cell inner membrane. The catalysed reaction is a quinone + NADH + 5 H(+)(in) = a quinol + NAD(+) + 4 H(+)(out). In terms of biological role, NDH-1 shuttles electrons from NADH, via FMN and iron-sulfur (Fe-S) centers, to quinones in the respiratory chain. The immediate electron acceptor for the enzyme in this species is believed to be ubiquinone. Couples the redox reaction to proton translocation (for every two electrons transferred, four hydrogen ions are translocated across the cytoplasmic membrane), and thus conserves the redox energy in a proton gradient. The polypeptide is NADH-quinone oxidoreductase subunit C (Erythrobacter litoralis (strain HTCC2594)).